We begin with the raw amino-acid sequence, 93 residues long: MARVTVQEAADKIGNRFDLILTAARRARQLQLHVREPLVPEENDKPTVIALREIEKGLINGQIMDQLENNDAIQQEVAEQEAISFLADVQANA.

This sequence belongs to the RNA polymerase subunit omega family. The RNAP catalytic core consists of 2 alpha, 1 beta, 1 beta' and 1 omega subunit. When a sigma factor is associated with the core the holoenzyme is formed, which can initiate transcription.

The enzyme catalyses RNA(n) + a ribonucleoside 5'-triphosphate = RNA(n+1) + diphosphate. In terms of biological role, promotes RNA polymerase assembly. Latches the N- and C-terminal regions of the beta' subunit thereby facilitating its interaction with the beta and alpha subunits. The polypeptide is DNA-directed RNA polymerase subunit omega (Actinobacillus pleuropneumoniae serotype 3 (strain JL03)).